Reading from the N-terminus, the 335-residue chain is Transaldolase (335 aa).

Ser-2 is subject to N-acetylserine. The active-site Schiff-base intermediate with substrate is Lys-144.

The protein belongs to the transaldolase family. Type 1 subfamily. In terms of assembly, homodimer.

It carries out the reaction D-sedoheptulose 7-phosphate + D-glyceraldehyde 3-phosphate = D-erythrose 4-phosphate + beta-D-fructose 6-phosphate. Its pathway is carbohydrate degradation; pentose phosphate pathway; D-glyceraldehyde 3-phosphate and beta-D-fructose 6-phosphate from D-ribose 5-phosphate and D-xylulose 5-phosphate (non-oxidative stage): step 2/3. Transaldolase is important for the balance of metabolites in the pentose-phosphate pathway. The protein is Transaldolase (TAL1) of Saccharomyces cerevisiae (strain ATCC 204508 / S288c) (Baker's yeast).